A 1402-amino-acid chain; its full sequence is Defective in tip formation protein A (1402 aa).

Disordered regions lie at residues 1-20 (MKDI…PPQI), 37-94 (NVTT…PQIV), 109-133 (NTPS…DNDI), and 210-292 (KQSS…RRLK). Repeat copies occupy residues 12 to 18 (TTTVAPP) and 40 to 46 (TTTVQPP). The segment at 12-92 (TTTVAPPQIN…TTTTTVQPPQ (81 aa)) is 4 X 7 AA repeat of T-T-T-[IV]-[AQ]-P-P. Low complexity predominate over residues 38–47 (VTTTTVQPPQ). Residues 48–58 (IVSPPSPPSPP) are compositionally biased toward pro residues. A compositionally biased stretch (low complexity) spans 59 to 94 (QTTTIAPPTILPTTKTTTTTTTTTTTTTTVQPPQIV). Tandem repeats lie at residues 60–66 (TTTIAPP) and 86–92 (TTVQPPQ). Residues 210 to 234 (KQSSQSQLQQQLSSQSLQQIQQKSK) are compositionally biased toward low complexity. The segment covering 235–253 (QPPPQQQQQQQPPPPPIPL) has biased composition (pro residues). Residues 254–279 (LPQIHQQLKPKQQQEQQQQQEQQQQQ) are compositionally biased toward low complexity. The stretch at 350–383 (QRIKSFIENHKKKKQKYREYQSEKNQQQKSNSKK) forms a coiled coil. Disordered stretches follow at residues 429 to 453 (DQQQ…SPMT) and 712 to 745 (NNNN…NLSN). The span at 430 to 453 (QQQQQQQQQQSTMTTTSSSSSPMT) shows a compositional bias: low complexity.

Its subcellular location is the cell surface. Required for correct organization of the actin cytoskeleton and cytokinesis. Also required for apical sorting of prestalk cells, a prerequisite for formation of the tip at the mound stage and subsequent formation of the fruiting body. May be required for cell adhesion. This chain is Defective in tip formation protein A (dtfA), found in Dictyostelium discoideum (Social amoeba).